A 497-amino-acid chain; its full sequence is 3-octaprenyl-4-hydroxybenzoate carboxy-lyase (497 aa).

Asn175 contributes to the Mn(2+) binding site. Prenylated FMN is bound by residues 178-180, 192-194, and 197-198; these read IYR, RWL, and RG. Glu241 is a binding site for Mn(2+). Asp290 serves as the catalytic Proton donor.

This sequence belongs to the UbiD family. In terms of assembly, homohexamer. It depends on prenylated FMN as a cofactor. The cofactor is Mn(2+).

Its subcellular location is the cell membrane. It catalyses the reaction a 4-hydroxy-3-(all-trans-polyprenyl)benzoate + H(+) = a 2-(all-trans-polyprenyl)phenol + CO2. Its pathway is cofactor biosynthesis; ubiquinone biosynthesis. Its function is as follows. Catalyzes the decarboxylation of 3-octaprenyl-4-hydroxy benzoate to 2-octaprenylphenol, an intermediate step in ubiquinone biosynthesis. The polypeptide is 3-octaprenyl-4-hydroxybenzoate carboxy-lyase (Shigella sonnei (strain Ss046)).